The following is a 144-amino-acid chain: 3-hydroxyacyl-[acyl-carrier-protein] dehydratase FabZ (144 aa).

Residue histidine 48 is part of the active site.

It belongs to the thioester dehydratase family. FabZ subfamily.

The protein resides in the cytoplasm. The catalysed reaction is a (3R)-hydroxyacyl-[ACP] = a (2E)-enoyl-[ACP] + H2O. Functionally, involved in unsaturated fatty acids biosynthesis. Catalyzes the dehydration of short chain beta-hydroxyacyl-ACPs and long chain saturated and unsaturated beta-hydroxyacyl-ACPs. The polypeptide is 3-hydroxyacyl-[acyl-carrier-protein] dehydratase FabZ (Listeria innocua serovar 6a (strain ATCC BAA-680 / CLIP 11262)).